The following is an 83-amino-acid chain: UPF0248 protein PYRAB10580 (83 aa).

It belongs to the UPF0248 family.

The chain is UPF0248 protein PYRAB10580 from Pyrococcus abyssi (strain GE5 / Orsay).